Reading from the N-terminus, the 288-residue chain is DegV domain-containing protein MYPU_3590 (288 aa).

Residues 3-275 (IAIVIDSSSG…LGAIAISLVK (273 aa)) enclose the DegV domain. Hexadecanoate is bound by residues Ser61 and Ser92.

In terms of biological role, may bind long-chain fatty acids, such as palmitate, and may play a role in lipid transport or fatty acid metabolism. The chain is DegV domain-containing protein MYPU_3590 from Mycoplasmopsis pulmonis (strain UAB CTIP) (Mycoplasma pulmonis).